The following is a 328-amino-acid chain: Reticulocalbin-3 (328 aa).

The N-terminal stretch at 1-20 (MMWRWTLMLLLLLLRHWALG) is a signal peptide. The disordered stretch occupies residues 24-48 (PDAGPHGQDRVHHGTPLSEAPHDDA). EF-hand domains are found at residues 75–112 (ESQA…TQQR), 113–148 (HIRD…HYEP), 163–198 (KMLA…EEFP), 200–235 (MRDI…AEPG), 241–276 (WVQT…PSQD), and 277–312 (QPLV…FVGS). The Ca(2+) site is built by Asp92, Asp94, Trp96, Glu101, Asp126, Asp128, Asp130, Arg132, and Glu137. Asn140 carries N-linked (GlcNAc...) asparagine glycosylation. 20 residues coordinate Ca(2+): Asp176, Asp178, Asp180, Met182, Glu187, Asp213, Asn215, Asp217, Tyr219, Glu224, Asp254, Asn256, Asp258, Arg260, Glu265, Asp290, Asp292, Asp294, Arg296, and Glu301. The Prevents secretion from ER signature appears at 325-328 (HDEL).

It belongs to the CREC family. As to quaternary structure, interacts with PCSK6 (immature form including the propeptide); probably involved in the maturation and the secretion of PCSK6. Post-translationally, N-glycosylated. In terms of processing, degraded by PCSK6 and other endoproteases including FURIN and PCSK5.

Its subcellular location is the endoplasmic reticulum lumen. Its function is as follows. Probable molecular chaperone assisting protein biosynthesis and transport in the endoplasmic reticulum. Required for the proper biosynthesis and transport of pulmonary surfactant-associated protein A/SP-A, pulmonary surfactant-associated protein D/SP-D and the lipid transporter ABCA3. By regulating both the proper expression and the degradation through the endoplasmic reticulum-associated protein degradation pathway of these proteins plays a crucial role in pulmonary surfactant homeostasis. Has an anti-fibrotic activity by negatively regulating the secretion of type I and type III collagens. This calcium-binding protein also transiently associates with immature PCSK6 and regulates its secretion. The protein is Reticulocalbin-3 of Rattus norvegicus (Rat).